Consider the following 579-residue polypeptide: Fatty-acid amide hydrolase 1 (579 aa).

A helical transmembrane segment spans residues Thr9–Leu29. At Arg30–Asp403 the chain is on the cytoplasmic side. The active-site Charge relay system is Lys142. Residues Met191, Ser217, and Ile238–Ser241 contribute to the substrate site. Residue Ser217 is the Charge relay system of the active site. Residue Ser241 is the Acyl-ester intermediate of the active site. Residue Ser241 is modified to Phosphoserine. An intramembrane segment occupies Leu404–Leu433. Over Asn434 to Ser579 the chain is Cytoplasmic.

It belongs to the amidase family. Homodimer. Found in neuronal cells throughout the CNS. Expressed in liver and brain, and to a lesser extent in spleen, lung, kidney and testes.

It is found in the endoplasmic reticulum membrane. It localises to the golgi apparatus membrane. It catalyses the reaction N-(5Z,8Z,11Z,14Z-eicosatetraenoyl)-ethanolamine + H2O = ethanolamine + (5Z,8Z,11Z,14Z)-eicosatetraenoate. It carries out the reaction (9Z)-octadecenamide + H2O = (9Z)-octadecenoate + NH4(+). The catalysed reaction is 2-(5Z,8Z,11Z,14Z-eicosatetraenoyl)-glycerol + H2O = glycerol + (5Z,8Z,11Z,14Z)-eicosatetraenoate + H(+). The enzyme catalyses (9Z,12Z,15Z)-octadecatrienamide + H2O = (9Z,12Z,15Z)-octadecatrienoate + NH4(+). It catalyses the reaction (5Z,8Z,11Z,14Z)-eicosatetraenamide + H2O = (5Z,8Z,11Z,14Z)-eicosatetraenoate + NH4(+). It carries out the reaction (6Z)-octadecenamide + H2O = (6Z)-octadecenoate + NH4(+). The catalysed reaction is (15Z)-tetracosenamide + H2O = (15Z)-tetracosenoate + NH4(+). The enzyme catalyses (8Z,11Z,14Z)-eicosatrienamide + H2O = (8Z,11Z,14Z)-eicosatrienoate + NH4(+). It catalyses the reaction (11Z,14Z,17Z)-eicosatrienamide + H2O = (11Z,14Z,17Z)-eicosatrienoate + NH4(+). It carries out the reaction (11Z,14Z)-eicosadienamide + H2O = (11Z,14Z)-eicosadienoate + NH4(+). The catalysed reaction is (9Z,12Z)-octadecadienamide + H2O = (9Z,12Z)-octadecadienoate + NH4(+). The enzyme catalyses tetradecamide + H2O = tetradecanoate + NH4(+). It catalyses the reaction N-(9Z-octadecenoyl) ethanolamine + H2O = ethanolamine + (9Z)-octadecenoate. It carries out the reaction N-(9Z-octadecenoyl)-taurine + H2O = taurine + (9Z)-octadecenoate. The catalysed reaction is 1-O-methyl-(5Z,8Z,11Z,14Z)-eicosatetraenoate + H2O = methanol + (5Z,8Z,11Z,14Z)-eicosatetraenoate + H(+). The enzyme catalyses (11Z)-eicosenamide + H2O = (11Z)-eicosenoate + NH4(+). It catalyses the reaction N-(9Z-hexadecenoyl) ethanolamine + H2O = (9Z)-hexadecenoate + ethanolamine. It carries out the reaction N-octadecanoyl ethanolamine + H2O = octadecanoate + ethanolamine. The catalysed reaction is N-docosanoyl-ethanolamine + H2O = docosanoate + ethanolamine. The enzyme catalyses N-tetracosanoyl-taurine + H2O = tetracosanoate + taurine. It catalyses the reaction N-(15Z-tetracosenoyl)-ethanolamine + H2O = (15Z)-tetracosenoate + ethanolamine. It carries out the reaction N-docosanoyl-taurine + H2O = docosanoate + taurine. The catalysed reaction is N-(15Z-tetracosenoyl)-taurine + H2O = (15Z)-tetracosenoate + taurine. The enzyme catalyses N-tricosanoyl-taurine + H2O = tricosanoate + taurine. It catalyses the reaction (9Z)-octadecenoate + glycine = N-(9Z-octadecenoyl)glycine + H2O. It carries out the reaction N-(5Z,8Z,11Z,14Z)-eicosatetraenoyl-glycine + H2O = (5Z,8Z,11Z,14Z)-eicosatetraenoate + glycine. The catalysed reaction is N-(5Z,8Z,11Z,14Z-eicosatetraenoyl)-L-serine + H2O = (5Z,8Z,11Z,14Z)-eicosatetraenoate + L-serine. With respect to regulation, inhibited by trifluoromethyl ketone. In terms of biological role, catalyzes the hydrolysis of endogenous amidated lipids like the sleep-inducing lipid oleamide ((9Z)-octadecenamide), the endocannabinoid anandamide (N-(5Z,8Z,11Z,14Z-eicosatetraenoyl)-ethanolamine), as well as other fatty amides, to their corresponding fatty acids, thereby regulating the signaling functions of these molecules. Hydrolyzes polyunsaturated substrate anandamide preferentially as compared to monounsaturated substrates. It can also catalyze the hydrolysis of the endocannabinoid 2-arachidonoylglycerol (2-(5Z,8Z,11Z,14Z-eicosatetraenoyl)-glycerol). FAAH cooperates with PM20D1 in the hydrolysis of amino acid-conjugated fatty acids such as N-fatty acyl glycine and N-fatty acyl-L-serine, thereby acting as a physiological regulator of specific subsets of intracellular, but not of extracellular, N-fatty acyl amino acids. The chain is Fatty-acid amide hydrolase 1 (Faah) from Rattus norvegicus (Rat).